Here is a 170-residue protein sequence, read N- to C-terminus: Ribosome maturation factor RimM (170 aa).

The PRC barrel domain maps to 92–163; the sequence is KEGWYYFELE…RMDVELPPGL (72 aa).

It belongs to the RimM family. As to quaternary structure, binds ribosomal protein uS19.

It localises to the cytoplasm. In terms of biological role, an accessory protein needed during the final step in the assembly of 30S ribosomal subunit, possibly for assembly of the head region. Essential for efficient processing of 16S rRNA. May be needed both before and after RbfA during the maturation of 16S rRNA. It has affinity for free ribosomal 30S subunits but not for 70S ribosomes. This chain is Ribosome maturation factor RimM, found in Desulfitobacterium hafniense (strain Y51).